Consider the following 74-residue polypeptide: Lantibiotic lichenicidin A1 (74 aa).

Residues 1–42 (MSKKEMILSWKNPMYRTESSYHPAGNILKELQEEEQHSIAGG) constitute a propeptide that is removed on maturation. At threonine 43 the chain carries 2-oxobutanoic acid. The segment at residues 45 to 49 (TLSTC) is a cross-link (beta-methyllanthionine (Thr-Cys)). Serine 47 bears the 2,3-didehydroalanine (Ser) mark. Threonine 48 is modified ((Z)-2,3-didehydrobutyrine). The lanthionine (Ser-Cys) cross-link spans 53–63 (SKPLGNNGYLC). 2 consecutive cross-links (beta-methyllanthionine (Thr-Cys)) follow at residues 64–69 (TVTKEC) and 66–73 (TKECMPSC).

Maturation of lantibiotics involves the enzymatic conversion of Thr, and Ser into dehydrated AA and the formation of thioether bonds with cysteine. This is followed by membrane translocation and cleavage of the modified precursor.

The protein resides in the secreted. Its subcellular location is the cell wall. In terms of biological role, lanthionine-containing peptide antibiotic (lantibiotic) active on Gram-positive bacteria. The bactericidal activity of lantibiotics is based on depolarization of energized bacterial cytoplasmic membranes, initiated by the formation of aqueous transmembrane pores. When present individually, LchA1 exhibits activity towards L.lactis HP. When combined with LchA2, it displays activity towards a broad spectrum of non-pathogenic and pathogenic Gram-positive bacteria including strains of L.monocytogenes, methicillin-resistant S.aureus, S.pneumoniae and strains of vancomycin-resistant enterococci, but not towards E.faecium L4001 and BM4147-1. Combined LchA1 and LchA2 peptides also inhibit Bacillus sp. HIL-Y85/54728, L.lactis DPC3417 and B.halodurans C-125, which produce lantibiotics themselves. Inactivated by proteinase K and pronase E, but not by trypsin and chymotrypsin. The chain is Lantibiotic lichenicidin A1 from Bacillus licheniformis (strain ATCC 14580 / DSM 13 / JCM 2505 / CCUG 7422 / NBRC 12200 / NCIMB 9375 / NCTC 10341 / NRRL NRS-1264 / Gibson 46).